Here is an 87-residue protein sequence, read N- to C-terminus: Small ribosomal subunit protein uS17 (87 aa).

It belongs to the universal ribosomal protein uS17 family. Part of the 30S ribosomal subunit.

One of the primary rRNA binding proteins, it binds specifically to the 5'-end of 16S ribosomal RNA. This Lacticaseibacillus casei (strain BL23) (Lactobacillus casei) protein is Small ribosomal subunit protein uS17.